A 136-amino-acid chain; its full sequence is Probable disulfide formation protein (136 aa).

A helical membrane pass occupies residues 7-26 (SYALYFAWAISCAGTLISIF). Cys-36 and Cys-39 are disulfide-bonded. Transmembrane regions (helical) follow at residues 41 to 60 (YQRICLFPLTVILGISAYRE) and 67 to 84 (YILPQAVLGLGISIYQVF). An intrachain disulfide couples Cys-96 to Cys-101. Residues 109–131 (SYVTIPMASVVAFGAIVCLLVLT) traverse the membrane as a helical segment.

This sequence belongs to the DsbB family. BdbC subfamily.

The protein resides in the cell inner membrane. Functionally, required for disulfide bond formation in some proteins. The protein is Probable disulfide formation protein of Chlamydia pneumoniae (Chlamydophila pneumoniae).